The sequence spans 233 residues: Phosphatidylserine decarboxylase proenzyme (233 aa).

S190 serves as the catalytic Schiff-base intermediate with substrate; via pyruvic acid. S190 is modified (pyruvic acid (Ser); by autocatalysis).

It belongs to the phosphatidylserine decarboxylase family. PSD-A subfamily. In terms of assembly, heterodimer of a large membrane-associated beta subunit and a small pyruvoyl-containing alpha subunit. It depends on pyruvate as a cofactor. Is synthesized initially as an inactive proenzyme. Formation of the active enzyme involves a self-maturation process in which the active site pyruvoyl group is generated from an internal serine residue via an autocatalytic post-translational modification. Two non-identical subunits are generated from the proenzyme in this reaction, and the pyruvate is formed at the N-terminus of the alpha chain, which is derived from the carboxyl end of the proenzyme. The post-translation cleavage follows an unusual pathway, termed non-hydrolytic serinolysis, in which the side chain hydroxyl group of the serine supplies its oxygen atom to form the C-terminus of the beta chain, while the remainder of the serine residue undergoes an oxidative deamination to produce ammonia and the pyruvoyl prosthetic group on the alpha chain.

It localises to the cell membrane. It catalyses the reaction a 1,2-diacyl-sn-glycero-3-phospho-L-serine + H(+) = a 1,2-diacyl-sn-glycero-3-phosphoethanolamine + CO2. Its pathway is phospholipid metabolism; phosphatidylethanolamine biosynthesis; phosphatidylethanolamine from CDP-diacylglycerol: step 2/2. Catalyzes the formation of phosphatidylethanolamine (PtdEtn) from phosphatidylserine (PtdSer). The protein is Phosphatidylserine decarboxylase proenzyme of Azorhizobium caulinodans (strain ATCC 43989 / DSM 5975 / JCM 20966 / LMG 6465 / NBRC 14845 / NCIMB 13405 / ORS 571).